Here is a 279-residue protein sequence, read N- to C-terminus: 2-dehydropantoate 2-reductase (279 aa).

NADP(+) is bound by residues 6-11 (GLGAVG), K66, and N86. Residue K158 is the Proton donor of the active site. Substrate-binding positions include K158, N162, N166, N176, and 225 to 228 (NLSS). E240 contributes to the NADP(+) binding site.

Belongs to the ketopantoate reductase family.

The protein localises to the cytoplasm. The catalysed reaction is (R)-pantoate + NAD(+) = 2-dehydropantoate + NADH + H(+). It catalyses the reaction (R)-pantoate + NADP(+) = 2-dehydropantoate + NADPH + H(+). Its pathway is cofactor biosynthesis; coenzyme A biosynthesis. In terms of biological role, catalyzes the NAD(P)H-dependent reduction of ketopantoate into pantoic acid. This Pyrobaculum aerophilum (strain ATCC 51768 / DSM 7523 / JCM 9630 / CIP 104966 / NBRC 100827 / IM2) protein is 2-dehydropantoate 2-reductase.